The sequence spans 471 residues: Ubiquitin carboxyl-terminal hydrolase calypso (471 aa).

Positions 45–276 (GWLELESDPG…IRFNLMAVVP (232 aa)) constitute a UCH catalytic domain. Cysteine 131 (nucleophile) is an active-site residue. Histidine 213 acts as the Proton donor in catalysis. The tract at residues 307-326 (DEQGESGNGDSQRPDTPTTL) is disordered. The segment covering 314–326 (NGDSQRPDTPTTL) has biased composition (polar residues). The ULD domain maps to 375 to 403 (NYDKFICTFLSMLAHQGVLGELVSQHLLP). The interval 405–471 (KKVSGQGAAN…KGRNKCRKRK (67 aa)) is positively charged C-terminal tail required for binding nucleosomes. Residues 412–471 (AANRISKQSNTASAGGSTTGASASTPKTQQQQAAAAKNGKSPSKTPGRRRKGRNKCRKRK) form a disordered region. Low complexity predominate over residues 422–447 (TASAGGSTTGASASTPKTQQQQAAAA). The segment covering 457–471 (PGRRRKGRNKCRKRK) has biased composition (basic residues).

The protein belongs to the peptidase C12 family. BAP1 subfamily. As to quaternary structure, catalytic component of the polycomb repressive deubiquitinase (PR-DUB) complex, at least composed of caly/calypso, Asx and sba (MBD5/6 homolog). The PR-DUB complex associates with nucleosomes to mediate deubiquitination of histone H2AK118ub1 substrates; the association requires the positively charged C-terminal tail of caly, probably due to direct binding of DNA. Interacts (via ULD domain) with Asx (via DEUBAD domain); the interaction produces a stable heterodimer with a composite binding site for ubiquitin. Homodimerizes (via coiled-coil hinge-region between the UCH and ULD domains) to mediate assembly of 2 copies of the caly-Asx heterodimer into a bisymmetric tetramer; dimerization enhances PR-DUB association with nucleosomes.

Its subcellular location is the nucleus. The catalysed reaction is Thiol-dependent hydrolysis of ester, thioester, amide, peptide and isopeptide bonds formed by the C-terminal Gly of ubiquitin (a 76-residue protein attached to proteins as an intracellular targeting signal).. Catalytic component of the polycomb repressive deubiquitinase (PR-DUB) complex, a complex that specifically mediates deubiquitination of histone H2A monoubiquitinated at 'Lys-119' (H2AK118ub1). Mediates bisymmetric organization of the PR-DUB complex and is involved in association with nucleosomes to mediate deubiquitination. Does not deubiquitinate monoubiquitinated histone H2B. Required to maintain the transcriptionally repressive state of homeotic genes throughout development. The PR-DUB complex has weak or no activity toward 'Lys-48'- and 'Lys-63'-linked polyubiquitin chains. Polycomb group (PcG) protein. In Drosophila sechellia (Fruit fly), this protein is Ubiquitin carboxyl-terminal hydrolase calypso.